The following is a 525-amino-acid chain: AP-4 complex accessory subunit Tepsin (525 aa).

The region spanning 8-141 (RDRLSFLHRL…FSDTVLPLAP (134 aa)) is the ENTH domain. A disordered region spans residues 139 to 229 (LAPSQPLGTP…SHSGASREPG (91 aa)). Low complexity predominate over residues 193–225 (SGPSSQNSSQNSDLSRVSDSGSHSGSDSHSGAS). 2 positions are modified to phosphoserine: S333 and S356. A disordered region spans residues 355-465 (LSPARGTSAE…PKRGPSSCAW (111 aa)). Low complexity predominate over residues 393–412 (PLSSTPVSSRSPAPSSGMPS). Pro residues predominate over residues 413 to 429 (SPVPTPPPDASPIPAPG). The segment covering 434–448 (AEARLAESRRWRPER) has biased composition (basic and acidic residues). The interaction with AP4B1 stretch occupies residues 467 to 477 (RDSLFAGMELV). Residues 487-525 (AAAGESCPDAPRAPQTSSQRTAAKEPPGSEPSAFAFLNA) form a disordered region. The interval 515–525 (SEPSAFAFLNA) is interaction with AP4E1.

Interacts with AP4B1 and AP4E1; the interaction is direct and mediates the association of TEPSIN with the adapter-like complex 4 (AP-4), a heterotetramer composed of AP4B1, AP4E1, AP4M1 and AP4S1.

The protein localises to the golgi apparatus. Its subcellular location is the trans-Golgi network membrane. It localises to the cytoplasmic vesicle. It is found in the cytoplasm. The protein resides in the cytosol. Its function is as follows. Associates with the adapter-like complex 4 (AP-4) and may therefore play a role in vesicular trafficking of proteins at the trans-Golgi network. The protein is AP-4 complex accessory subunit Tepsin of Homo sapiens (Human).